The following is a 463-amino-acid chain: Succinate--CoA ligase [ADP-forming] subunit beta, mitochondrial (463 aa).

A mitochondrion-targeting transit peptide spans 1 to 53 (MAASMFYGRQLAAAALRSHRPQTTLRAAAQVLGNSGLFNKHGLQVQQQQQRTL). The ATP-grasp domain maps to 61 to 288 (MELLQEAGVS…SNSAYRQKKI (228 aa)). N6-acetyllysine is present on Lys-78. Tyr-84 is modified (phosphotyrosine). Residue Lys-88 is modified to N6-acetyllysine; alternate. Lys-88 carries the N6-succinyllysine; alternate modification. Residues Lys-98 and 105-107 (GRG) contribute to the ATP site. N6-acetyllysine is present on residues Lys-129, Lys-139, Lys-143, and Lys-216. Residues Asn-258 and Asp-272 each coordinate Mg(2+). Phosphoserine is present on Ser-279. Substrate is bound at residue Asn-323. A Phosphothreonine modification is found at Thr-341. Position 368 is an N6-acetyllysine (Lys-368). Residue 380–382 (GIM) participates in substrate binding. Position 438 is an N6-acetyllysine (Lys-438).

Belongs to the succinate/malate CoA ligase beta subunit family. ATP-specific subunit beta subfamily. Heterodimer of an alpha and a beta subunit. The beta subunit determines specificity for ATP. Interacts with ALAS2. The cofactor is Mg(2+).

Its subcellular location is the mitochondrion. The catalysed reaction is succinate + ATP + CoA = succinyl-CoA + ADP + phosphate. Its pathway is carbohydrate metabolism; tricarboxylic acid cycle; succinate from succinyl-CoA (ligase route): step 1/1. In terms of biological role, ATP-specific succinyl-CoA synthetase functions in the citric acid cycle (TCA), coupling the hydrolysis of succinyl-CoA to the synthesis of ATP and thus represents the only step of substrate-level phosphorylation in the TCA. The beta subunit provides nucleotide specificity of the enzyme and binds the substrate succinate, while the binding sites for coenzyme A and phosphate are found in the alpha subunit. In Mus musculus (Mouse), this protein is Succinate--CoA ligase [ADP-forming] subunit beta, mitochondrial.